We begin with the raw amino-acid sequence, 447 residues long: Protein mab-21-like 4 (447 aa).

This is Protein mab-21-like 4 from Homo sapiens (Human).